The chain runs to 65 residues: Defensin-B2 (65 aa).

An N-terminal signal peptide occupies residues 1–23 (MEARVLLLCAVLFLLVHTPPAAG). Disulfide bonds link cysteine 29/cysteine 56, cysteine 36/cysteine 50, and cysteine 40/cysteine 57.

It belongs to the beta-defensin family. Lowly expressed in spleen, and lung.

The protein resides in the secreted. Has antimicrobial activity. The sequence is that of Defensin-B2 from Ornithorhynchus anatinus (Duckbill platypus).